A 790-amino-acid chain; its full sequence is E3 ubiquitin-protein ligase Jade-2 (790 aa).

Disordered regions lie at residues 1-52 (MEEK…PSEV) and 111-130 (GPPA…SQPD). Phosphoserine occurs at positions 9 and 15. Residues 9–28 (SISSDNSDTTDSHATSTSAS) show a composition bias toward low complexity. N6-acetyllysine occurs at positions 32 and 38. Residue serine 117 is modified to Phosphoserine. The segment at 199–249 (DVVCDVCRSPEGEDGNEMVFCDKCNVCVHQACYGILKVPTGSWLCRTCALG) adopts a PHD-type 1 zinc-finger fold. The C2HC pre-PHD-type zinc finger occupies 251-285 (QPKCLLCPKRGGALKPTRSGTKWVHVSCALWIPEV). Residue lysine 298 is modified to N6-acetyllysine. A PHD-type 2 zinc finger spans residues 309-365 (LSCSLCKECTGTCIQCSMPSCVTAFHVTCAFDHGLEMRTILADNDEVKFKSFCQEHS). Disordered regions lie at residues 361–386 (CQEH…AGED) and 578–777 (SFMR…PREA). The segment covering 372–381 (EPTSEPTEPS) has biased composition (polar residues). The span at 593-606 (KARGRTRLPAKKKP) shows a compositional bias: basic residues. Low complexity predominate over residues 684–693 (AASVAADSDV). Over residues 737–747 (ERPKVSLHFDT) the composition is skewed to basic and acidic residues. Residues 757 to 767 (EMSDSDVEAED) show a composition bias toward acidic residues.

Belongs to the JADE family. In terms of assembly, component of the HBO1 complex composed at least of ING4 or ING5, MYST2/HBO1, MEAF6, and one of JADE1, JADE2 and JADE3. Interacts (via C-terminus) with KDM1A (via AOD/Tower domain).

It catalyses the reaction S-ubiquitinyl-[E2 ubiquitin-conjugating enzyme]-L-cysteine + [acceptor protein]-L-lysine = [E2 ubiquitin-conjugating enzyme]-L-cysteine + N(6)-ubiquitinyl-[acceptor protein]-L-lysine.. The protein operates within protein modification; protein ubiquitination. Functionally, scaffold subunit of some HBO1 complexes, which have a histone H4 acetyltransferase activity. Acts as an E3 ubiquitin-protein ligase mediating the ubiquitination and subsequent proteasomal degradation of target protein histone demethylase KDM1A. Also acts as a ubiquitin ligase E3 toward itself. Positive regulator of neurogenesis. This is E3 ubiquitin-protein ligase Jade-2 (JADE2) from Homo sapiens (Human).